Here is a 911-residue protein sequence, read N- to C-terminus: Band 3 anion transport protein (911 aa).

At M1 the chain carries N-acetylmethionine. Positions 1–26 (MEELQDDYEDMMEENLEQEEYEDPDI) are enriched in acidic residues. The disordered stretch occupies residues 1–40 (MEELQDDYEDMMEENLEQEEYEDPDIPESQMEEPAAHDTE). Residues 1–403 (MEELQDDYED…LSDITDAFSP (403 aa)) are Cytoplasmic-facing. Y8, Y21, and Y46 each carry phosphotyrosine. Positions 13–31 (EENLEQEEYEDPDIPESQM) are (Microbial infection) Interaction with P.falciparum (isolate K1) FBPA. Positions 55-290 (HKVYVELQEL…LGRAAATLMS (236 aa)) are globular. Residues 176–185 (AVLTRSGDPS) are interaction with ANK1. Phosphoserine is present on residues S185 and S350. Positions 304 to 357 (RGELLHSLEGFLDCSLVLPPTDAPSEQALLSLVPVQRELLRRRYQSSPAKPDSS) are dimerization arm. Y359 carries the post-translational modification Phosphotyrosine. The helical transmembrane segment at 404-427 (QVLAAVIFIYFAALSPAITFGGLL) threads the bilayer. The Extracellular portion of the chain corresponds to 428–435 (GEKTRNQM). The chain crosses the membrane as a helical span at residues 436–456 (GVSELLISTAVQGILFALLGA). The Cytoplasmic portion of the chain corresponds to 457–459 (QPL). The chain crosses the membrane as a discontinuously helical span at residues 460-476 (LVVGFSGPLLVFEEAFF). Topologically, residues 477–485 (SFCETNGLE) are extracellular. The chain crosses the membrane as a helical span at residues 486 to 506 (YIVGRVWIGFWLILLVVLVVA). Over 507-518 (FEGSFLVRFISR) the chain is Cytoplasmic. A helical transmembrane segment spans residues 519-541 (YTQEIFSFLISLIFIYETFSKLI). Residues 542 to 570 (KIFQDHPLQKTYNYNVLMVPKPQGPLPNT) are Extracellular-facing. Residues 559–630 (MVPKPQGPLP…DFFIQDTYTQ (72 aa)) form an involved in anion transport region. The helical transmembrane segment at 571–591 (ALLSLVLMAGTFFFAMMLRKF) threads the bilayer. At 592-602 (KNSSYFPGKLR) the chain is on the cytoplasmic side. A helical membrane pass occupies residues 603-623 (RVIGDFGVPISILIMVLVDFF). Over 624–663 (IQDTYTQKLSVPDGFKVSNSSARGWVIHPLGLRSEFPIWM) the chain is Extracellular. N-linked (GlcNAc...) (complex) asparagine glycosylation occurs at N642. A helical membrane pass occupies residues 664-684 (MFASALPALLVFILIFLESQI). The Cytoplasmic segment spans residues 685–700 (TTLIVSKPERKMVKGS). The chain crosses the membrane as a helical span at residues 701 to 719 (GFHLDLLLVVGMGGVAALF). Residues 720–737 (GMPWLSATTVRSVTHANA) traverse the membrane as a discontinuously helical segment. The segment at 720–761 (GMPWLSATTVRSVTHANALTVMGKASTPGAAAQIQEVKEQRI) is (Microbial infection) 5ABC region; interaction with P.falciparum (isolate 3D7) MSP9. Over 738-760 (LTVMGKASTPGAAAQIQEVKEQR) the chain is Cytoplasmic. A run of 2 helical transmembrane segments spans residues 761–781 (ISGLLVAVLVGLSILMEPILS) and 782–800 (RIPLAVLFGIFLYMGVTSL). Topologically, residues 801–838 (SGIQLFDRILLLFKPPKYHPDVPYVKRVKTWRMHLFTG) are cytoplasmic. An intramembrane region (discontinuously helical) is located at residues 839-869 (IQIICLAVLWVVKSTPASLALPFVLILTVPL). C843 is lipidated: S-palmitoyl cysteine. The Cytoplasmic portion of the chain corresponds to 870-911 (RRVLLPLIFRNVELQCLDADDAKATFDEEEGRDEYDEVAMPV). Y904 carries the phosphotyrosine modification.

It belongs to the anion exchanger (TC 2.A.31) family. As to quaternary structure, a dimer in solution, but in its membrane environment, it exists primarily as a mixture of dimers and tetramers and spans the membrane asymmetrically. Component of the ankyrin-1 complex in the erythrocyte, composed of ANK1, RHCE, RHAG, SLC4A1, EPB42, GYPA, GYPB and AQP1. Interacts with STOM; this interaction positively regulates SLC4A1 activity. Interacts with GYPA; a GYPA monomer is bound at each end of the SLC4A1 dimer forming a heterotetramer. Three SLC4A1 dimers (Band 3-I, Band 3-II and Band 3-III) participates in the ankyrin-1 complex. Interacts (via the cytoplasmic domain) with EPB42; this interaction is mediated by the SLC4A1 Band 3-I dimer. Interacts (via the cytoplasmic domain) directly with ANK1; this interaction is mediated by the SLC4A1 Band 3-II and Band 3-III dimers. In terms of assembly, interacts with TMEM139. (Microbial infection) Interacts (via N-terminus) with P.falciparum (isolate K1) aldolase FBPA; the interaction inhibits FBPA catalytic activity. As to quaternary structure, (Microbial infection) Interacts (via the 5ABC region) with P.falciparum (isolate 3D7) MSP9/ABRA (via N-terminus). In terms of assembly, (Microbial infection) Interacts (via the 5ABC region) with P.falciparum (isolate 3D7) MSP1 p42 subunit. Post-translationally, phosphorylated on Tyr-8 and Tyr-21 most likely by SYK. PP1-resistant phosphorylation that precedes Tyr-359 and Tyr-904 phosphorylation. Phosphorylated on Tyr-359 and Tyr-904 most likely by LYN. PP1-inhibited phosphorylation that follows Tyr-8 and Tyr-21 phosphorylation. In terms of processing, N-glycosylated. As to expression, detected in erythrocytes (at protein level). In terms of tissue distribution, expressed in kidney (at protein level).

Its subcellular location is the cell membrane. The protein resides in the basolateral cell membrane. The enzyme catalyses hydrogencarbonate(in) + chloride(out) = hydrogencarbonate(out) + chloride(in). With respect to regulation, phenyl isothiocyanate inhibits anion transport in vitro. Functionally, functions both as a transporter that mediates electroneutral anion exchange across the cell membrane and as a structural protein. Component of the ankyrin-1 complex of the erythrocyte membrane; required for normal flexibility and stability of the erythrocyte membrane and for normal erythrocyte shape via the interactions of its cytoplasmic domain with cytoskeletal proteins, glycolytic enzymes, and hemoglobin. Functions as a transporter that mediates the 1:1 exchange of inorganic anions across the erythrocyte membrane. Mediates chloride-bicarbonate exchange in the kidney, and is required for normal acidification of the urine. Its function is as follows. (Microbial infection) Acts as a receptor for P.falciparum (isolate 3D7) MSP9 and thus, facilitates merozoite invasion of erythrocytes. Acts as a receptor for P.falciparum (isolate 3D7) MSP1 and thus, facilitates merozoite invasion of erythrocytes. The sequence is that of Band 3 anion transport protein from Homo sapiens (Human).